The following is a 287-amino-acid chain: Acetylglutamate kinase (287 aa).

Substrate is bound by residues Gly65–Gly66, Arg87, and Asn181.

Belongs to the acetylglutamate kinase family. ArgB subfamily.

It localises to the cytoplasm. It carries out the reaction N-acetyl-L-glutamate + ATP = N-acetyl-L-glutamyl 5-phosphate + ADP. Its pathway is amino-acid biosynthesis; L-arginine biosynthesis; N(2)-acetyl-L-ornithine from L-glutamate: step 2/4. Functionally, catalyzes the ATP-dependent phosphorylation of N-acetyl-L-glutamate. This is Acetylglutamate kinase from Syntrophomonas wolfei subsp. wolfei (strain DSM 2245B / Goettingen).